Here is a 779-residue protein sequence, read N- to C-terminus: Conserved oligomeric Golgi complex subunit 6 (779 aa).

The protein belongs to the COG6 family.

Its subcellular location is the golgi apparatus membrane. In terms of biological role, acts as a component of the peripheral membrane COG complex that is involved in intra-Golgi protein trafficking. COG is located at the cis-Golgi, and regulates tethering of retrograde intra-Golgi vesicles and possibly a number of other membrane trafficking events. This is Conserved oligomeric Golgi complex subunit 6 (COG6) from Kluyveromyces lactis (strain ATCC 8585 / CBS 2359 / DSM 70799 / NBRC 1267 / NRRL Y-1140 / WM37) (Yeast).